A 478-amino-acid polypeptide reads, in one-letter code: MSAMTSDTLTFECETGNYHTFCPISCVAWLYQKIEDSFFLVIGTKTCGYFLQNALGVMIFAEPRYAMAELEEGDISAQLNDYQELKRLCTQIKQDRNPSVIVWIGTCTTEIIKMDLEGMAPKIEQEIKIPIVVARANGLDYAFTQGEDTVLAAMVERCPGETKLSEQSQDKGSSKQNFSSTKGLFSILNFNKKAAADTQPQEAEDYIDHPPLVLFGSLPGPVVSQLTLELKRQKIKVSGWLPSQRYTDLPAVGKGVYVCGVNPFLSRTATILMRRRKCKLIGAPFPIGPDGTRAWVEKICSVFNVEPIGLAERENKIWEGLEDYLQLVRGKSVFFMGDNLLEVSLARFLTRCGMIVYEIGIPYMDKRYQAAELALLEKTCQEMGVPMPRIVEKPDNYNQIQRIRELQPDLAITGMAHANPLEARGISTKWSVEFTFAQIHGFTNARDILELVTRPLRRNNSLEGLGWTSLVKEGVLSN.

Residues Cys-22, Cys-47, and Cys-107 each contribute to the [4Fe-4S] cluster site.

Belongs to the BchN/ChlN family. In terms of assembly, protochlorophyllide reductase is composed of three subunits; ChlL, ChlN and ChlB. Forms a heterotetramer of two ChlB and two ChlN subunits. [4Fe-4S] cluster is required as a cofactor.

The protein localises to the plastid. Its subcellular location is the chloroplast. It carries out the reaction chlorophyllide a + oxidized 2[4Fe-4S]-[ferredoxin] + 2 ADP + 2 phosphate = protochlorophyllide a + reduced 2[4Fe-4S]-[ferredoxin] + 2 ATP + 2 H2O. The protein operates within porphyrin-containing compound metabolism; chlorophyll biosynthesis (light-independent). Its function is as follows. Component of the dark-operative protochlorophyllide reductase (DPOR) that uses Mg-ATP and reduced ferredoxin to reduce ring D of protochlorophyllide (Pchlide) to form chlorophyllide a (Chlide). This reaction is light-independent. The NB-protein (ChlN-ChlB) is the catalytic component of the complex. This is Light-independent protochlorophyllide reductase subunit N from Chlorokybus atmophyticus (Soil alga).